The chain runs to 32 residues: Ranatuerin-2La (32 aa).

C27 and C32 are oxidised to a cystine.

Expressed by the skin glands.

Its subcellular location is the secreted. Functionally, antibacterial activity against Gram-positive bacterium S.aureus and Gram-negative bacterium E.coli. Weak activity against C.albicans. The chain is Ranatuerin-2La from Rana luteiventris (Columbia spotted frog).